A 353-amino-acid polypeptide reads, in one-letter code: UPF0283 membrane protein YcjF (353 aa).

Residues 1–19 show a composition bias toward basic and acidic residues; it reads MSEPLKPRIDFAEPLKEEP. Positions 1-35 are disordered; it reads MSEPLKPRIDFAEPLKEEPTSAFKAQQTFSEAESR. The next 3 helical transmembrane spans lie at 70 to 90, 100 to 120, and 213 to 233; these read MVMG…VQWT, VALG…GSVV, and ESTL…FIAW.

Belongs to the UPF0283 family.

The protein localises to the cell inner membrane. In Salmonella gallinarum (strain 287/91 / NCTC 13346), this protein is UPF0283 membrane protein YcjF.